The sequence spans 165 residues: Small ribosomal subunit protein bS16 (165 aa).

Positions 84–165 (WTHGNNPEKG…EAPAEEAAEG (82 aa)) are disordered. The span at 89-130 (NPEKGKPGKKAQERLAERAQREEERKQAEADAKAAAEAEKAA) shows a compositional bias: basic and acidic residues. The span at 131–157 (AAEAAAAAAAAPAVEEAPAEEAPAAEA) shows a compositional bias: low complexity.

This sequence belongs to the bacterial ribosomal protein bS16 family.

In Caulobacter vibrioides (strain ATCC 19089 / CIP 103742 / CB 15) (Caulobacter crescentus), this protein is Small ribosomal subunit protein bS16.